The primary structure comprises 124 residues: Fluoride-specific ion channel FluC 1 (124 aa).

4 helical membrane-spanning segments follow: residues 1-21 (MCAVSLTKPVAVVALGGALGA), 30-50 (LWPGIWTVLLINVVGSLLLGY), 64-84 (FLGVGVLGGFTTFSTFAVDAV), and 93-113 (LYVVATLIPALLAARLGMLAG). 2 residues coordinate Na(+): glycine 71 and threonine 74.

The protein belongs to the fluoride channel Fluc/FEX (TC 1.A.43) family.

Its subcellular location is the cell membrane. It carries out the reaction fluoride(in) = fluoride(out). Its activity is regulated as follows. Na(+) is not transported, but it plays an essential structural role and its presence is essential for fluoride channel function. In terms of biological role, fluoride-specific ion channel. Important for reducing fluoride concentration in the cell, thus reducing its toxicity. The protein is Fluoride-specific ion channel FluC 1 of Rhodococcus jostii (strain RHA1).